A 689-amino-acid polypeptide reads, in one-letter code: Armadillo-like helical domain-containing protein 3 (689 aa).

A helical transmembrane segment spans residues 520–538; it reads IFTLTLMVVNLFNMFITYG.

The protein belongs to the ARMH3 family.

Its subcellular location is the golgi apparatus membrane. The protein localises to the cytoplasm. Its function is as follows. May be involved in Golgi maintenance and protein secretion. This Xenopus laevis (African clawed frog) protein is Armadillo-like helical domain-containing protein 3.